The following is a 396-amino-acid chain: F-box protein pof13 (396 aa).

Positions Lys40 to Asn89 constitute an F-box domain.

Part of a SCF (SKP1-cullin-F-box) protein ligase complex. Interacts with skp1.

The protein resides in the cytoplasm. The protein operates within protein modification; protein ubiquitination. The sequence is that of F-box protein pof13 (pof13) from Schizosaccharomyces pombe (strain 972 / ATCC 24843) (Fission yeast).